An 854-amino-acid chain; its full sequence is Transcription factor asR3 (854 aa).

A DNA-binding region (zn(2)-C6 fungal-type) is located at residues 19 to 45 (CWECRRRKIKCDRNDPCAHCIRHETQC). The interval 56-156 (TDSDVSRTRP…SLSTNTSPSA (101 aa)) is disordered. 2 stretches are compositionally biased toward polar residues: residues 78–90 (ASGS…TRPS) and 125–145 (LNPS…SSRG). The segment covering 146 to 156 (PSLSTNTSPSA) has biased composition (low complexity).

It is found in the nucleus. Functionally, transcription factor; part of the gene cluster that mediates the biosynthesis of xenovulene A, an unusual meroterpenoid that has potent inhibitory effects on the human gamma-aminobutyrate A (GABAA) benzodiazepine receptor. The protein is Transcription factor asR3 of Sarocladium schorii (Acremonium strictum (strain IMI 501407)).